The primary structure comprises 488 residues: 3-octaprenyl-4-hydroxybenzoate carboxy-lyase (488 aa).

Asn172 is a binding site for Mn(2+). Residues 175–177, 189–191, and 194–195 contribute to the prenylated FMN site; these read IYR, RWL, and RG. Residue Glu238 coordinates Mn(2+). The active-site Proton donor is Asp287.

The protein belongs to the UbiD family. In terms of assembly, homohexamer. It depends on prenylated FMN as a cofactor. Mn(2+) is required as a cofactor.

It is found in the cell membrane. The catalysed reaction is a 4-hydroxy-3-(all-trans-polyprenyl)benzoate + H(+) = a 2-(all-trans-polyprenyl)phenol + CO2. It participates in cofactor biosynthesis; ubiquinone biosynthesis. Functionally, catalyzes the decarboxylation of 3-octaprenyl-4-hydroxy benzoate to 2-octaprenylphenol, an intermediate step in ubiquinone biosynthesis. The protein is 3-octaprenyl-4-hydroxybenzoate carboxy-lyase of Pseudomonas fluorescens (strain ATCC BAA-477 / NRRL B-23932 / Pf-5).